The chain runs to 266 residues: Putative pyruvate, phosphate dikinase regulatory protein (266 aa).

149–156 (GVSRTSKT) lines the ADP pocket.

The protein belongs to the pyruvate, phosphate/water dikinase regulatory protein family. PDRP subfamily.

The enzyme catalyses N(tele)-phospho-L-histidyl/L-threonyl-[pyruvate, phosphate dikinase] + ADP = N(tele)-phospho-L-histidyl/O-phospho-L-threonyl-[pyruvate, phosphate dikinase] + AMP + H(+). It carries out the reaction N(tele)-phospho-L-histidyl/O-phospho-L-threonyl-[pyruvate, phosphate dikinase] + phosphate + H(+) = N(tele)-phospho-L-histidyl/L-threonyl-[pyruvate, phosphate dikinase] + diphosphate. Functionally, bifunctional serine/threonine kinase and phosphorylase involved in the regulation of the pyruvate, phosphate dikinase (PPDK) by catalyzing its phosphorylation/dephosphorylation. In Halothermothrix orenii (strain H 168 / OCM 544 / DSM 9562), this protein is Putative pyruvate, phosphate dikinase regulatory protein.